Reading from the N-terminus, the 305-residue chain is Pseudouridine-5'-phosphate glycosidase (305 aa).

The active-site Proton donor is Glu-30. Substrate contacts are provided by Lys-91 and Val-111. Mn(2+) is bound at residue Asp-143. 145-147 (SAD) lines the substrate pocket. Residue Lys-164 is the Nucleophile of the active site.

The protein belongs to the pseudouridine-5'-phosphate glycosidase family. As to quaternary structure, homotrimer. Requires Mn(2+) as cofactor.

The enzyme catalyses D-ribose 5-phosphate + uracil = psi-UMP + H2O. In terms of biological role, catalyzes the reversible cleavage of pseudouridine 5'-phosphate (PsiMP) to ribose 5-phosphate and uracil. Functions biologically in the cleavage direction, as part of a pseudouridine degradation pathway. This chain is Pseudouridine-5'-phosphate glycosidase, found in Mesorhizobium japonicum (strain LMG 29417 / CECT 9101 / MAFF 303099) (Mesorhizobium loti (strain MAFF 303099)).